Reading from the N-terminus, the 113-residue chain is TYRO protein tyrosine kinase-binding protein (113 aa).

An N-terminal signal peptide occupies residues 1-27 (MGGLEPCSRLLLLPLLLAVGGLRPVQA). Over 28-40 (QAQSDCSCSTVSP) the chain is Extracellular. Residues 41–61 (GVLAGIVMGDLVLTVLIALAV) traverse the membrane as a helical segment. D50 provides a ligand contact to Ca(2+). The Cytoplasmic portion of the chain corresponds to 62-113 (YFLGRLVHRGRGAAEAATRKQRITETESPYQELQGQRSDVYSDLNMQRPYYK). The tract at residues 75–113 (AEAATRKQRITETESPYQELQGQRSDVYSDLNMQRPYYK) is disordered. In terms of domain architecture, ITAM spans 80 to 108 (RKQRITETESPYQELQGQRSDVYSDLNMQ). Positions 87-100 (TESPYQELQGQRSD) are enriched in polar residues. A phosphotyrosine mark is found at Y91 and Y102.

The protein belongs to the TYROBP family. In terms of assembly, homodimer; disulfide-linked. Homotrimer; disulfide-linked. Homotetramer; disulfide-linked. Homotrimers and homotetramers form when low levels of partner receptors are available and is competitive with assembly with interacting receptors. They may represent alternative oligomerization states or may be intermediates in the receptor assembly process. Binding of a metal cation aids in homooligomerization through coordination of the metal ion by the subunits of the oligomer. Interacts with TREM1. Interacts with TREM2. Interacts with CLECSF5. Interacts with CD300LB and CD300C2. Interacts with CD300E. Interacts (via ITAM domain) with SYK (via SH2 domains); activates SYK mediating neutrophils and macrophages integrin-mediated activation. Interacts with KLRC2. Interacts with CD300H. Interacts with KLRD1. Interacts with SIGLEC1. Post-translationally, following ligand binding by associated receptors, tyrosine phosphorylated in the ITAM domain which leads to activation of additional tyrosine kinases and subsequent cell activation.

The protein resides in the cell membrane. Functionally, adapter protein which non-covalently associates with activating receptors found on the surface of a variety of immune cells to mediate signaling and cell activation following ligand binding by the receptors. TYROBP is tyrosine-phosphorylated in the ITAM domain following ligand binding by the associated receptors which leads to activation of additional tyrosine kinases and subsequent cell activation. Also has an inhibitory role in some cells. Non-covalently associates with activating receptors of the CD300 family to mediate cell activation. Also mediates cell activation through association with activating receptors of the CD200R family. Required for neutrophil activation mediated by integrin. Required for the activation of myeloid cells mediated by the CLEC5A/MDL1 receptor. Associates with natural killer (NK) cell receptors such as the KLRD1/KLRC2 heterodimer to mediate NK cell activation. Associates with TREM1 to mediate activation of neutrophils and monocytes. Associates with TREM2 on monocyte-derived dendritic cells to mediate up-regulation of chemokine receptor CCR7 and dendritic cell maturation and survival. Association with TREM2 mediates cytokine-induced formation of multinucleated giant cells which are formed by the fusion of macrophages. Stabilizes the TREM2 C-terminal fragment (TREM2-CTF) produced by TREM2 ectodomain shedding which suppresses the release of pro-inflammatory cytokines. In microglia, required with TREM2 for phagocytosis of apoptotic neurons. Required with ITGAM/CD11B in microglia to control production of microglial superoxide ions which promote the neuronal apoptosis that occurs during brain development. Promotes pro-inflammatory responses in microglia following nerve injury which accelerates degeneration of injured neurons. Positively regulates the expression of the IRAK3/IRAK-M kinase and IL10 production by liver dendritic cells and inhibits their T cell allosimulatory ability. Negatively regulates B cell proliferation. Required for CSF1-mediated osteoclast cytoskeletal organization. Positively regulates multinucleation during osteoclast development. This chain is TYRO protein tyrosine kinase-binding protein, found in Pan troglodytes (Chimpanzee).